Reading from the N-terminus, the 835-residue chain is Microcephalin (835 aa).

In terms of domain architecture, BRCT 1 spans 1 to 93 (MAAPILKDVV…AHIDESLFPA (93 aa)). The tract at residues 184 to 206 (KEKRENLSPTSSQLIQQSHDNPS) is disordered. The span at 190–206 (LSPTSSQLIQQSHDNPS) shows a compositional bias: polar residues. Phosphoserine is present on residues serine 279, serine 287, serine 296, and serine 333. Threonine 335 carries the phosphothreonine modification. Residues 346 to 361 (HSRPRSSSVKRKRVSH) are compositionally biased toward basic residues. 2 disordered regions span residues 346–376 (HSRP…RKRS) and 418–442 (PDNL…PAQF). Serine 548 bears the Phosphoserine mark. The disordered stretch occupies residues 557–582 (GLKSTQNRGTTSKISNSSEGEAQSEH). Residues 559-577 (KSTQNRGTTSKISNSSEGE) show a composition bias toward polar residues. 2 consecutive BRCT domains span residues 640–730 (SGRG…PFEL) and 751–833 (YRGT…NYLL).

In terms of assembly, interacts with CDC27 and maybe other components of the APC/C complex. Interacts with histone variant H2AX under DNA damage conditions.

It localises to the cytoplasm. It is found in the cytoskeleton. The protein resides in the microtubule organizing center. Its subcellular location is the centrosome. Functionally, implicated in chromosome condensation and DNA damage induced cellular responses. May play a role in neurogenesis and regulation of the size of the cerebral cortex. This chain is Microcephalin, found in Gorilla gorilla gorilla (Western lowland gorilla).